We begin with the raw amino-acid sequence, 262 residues long: Putative ABC transporter ATP-binding protein SAV_3608 (262 aa).

Positions 18–248 constitute an ABC transporter domain; the sequence is LDVAGLAFAY…DTLMRAHRLE (231 aa). ATP is bound at residue 51–58; it reads GPNGAGKT.

Belongs to the ABC transporter superfamily.

It is found in the cell membrane. Probably part of an ABC transporter complex. Responsible for energy coupling to the transport system. The sequence is that of Putative ABC transporter ATP-binding protein SAV_3608 from Streptomyces avermitilis (strain ATCC 31267 / DSM 46492 / JCM 5070 / NBRC 14893 / NCIMB 12804 / NRRL 8165 / MA-4680).